A 242-amino-acid chain; its full sequence is C-reactive protein 3.3 (242 aa).

An N-terminal signal peptide occupies residues 1–24 (MKTFHGPTCGTAVSLCLLLFLTSA). One can recognise a Pentraxin (PTX) domain in the interval 30 to 241 (ITSKVKFPPS…GVVLSPNEIC (212 aa)). Phosphocholine is bound by residues threonine 60 and tyrosine 63. Disulfide bonds link cysteine 62–cysteine 125 and cysteine 112–cysteine 144. 2 residues coordinate Ca(2+): aspartate 85 and asparagine 86. The N-linked (GlcNAc...) asparagine glycan is linked to asparagine 147. The Ca(2+) site is built by glutamine 169, aspartate 170, and glutamine 180. A disulfide bridge connects residues cysteine 207 and cysteine 241.

This sequence belongs to the pentraxin family. As to quaternary structure, homopentamer. Pentraxin (or pentaxin) have a discoid arrangement of 5 non-covalently bound subunits. Requires Ca(2+) as cofactor.

Its subcellular location is the secreted. Might serve the role of immunoglobulins. The chain is C-reactive protein 3.3 from Limulus polyphemus (Atlantic horseshoe crab).